Here is a 44-residue protein sequence, read N- to C-terminus: Antimicrobial peptide 1b (44 aa).

A Chitin-binding type-1 domain is found at 1 to 42; the sequence is AQKCGEQGRGAKCPNCLCCGRYGFCGSTPDYCGVGCQSQCRG. 5 disulfide bridges follow: C4–C19, C13–C25, C16–C43, C18–C32, and C36–C40.

In terms of processing, contains 5 disulfide bonds.

Its function is as follows. Binds chitin. Has antifungal activity against F.oxysporum 16/10 (IC(50)=4.1 uM) and B.sorokiniana 6/10 (IC(50)=2.7 uM). Inhibits germination of fungal spores. The protein is Antimicrobial peptide 1b of Leymus arenarius (Lyme grass).